A 1138-amino-acid chain; its full sequence is 2'-5'-oligoadenylate synthase 3 (1138 aa).

Met-1 bears the N-acetylmethionine mark. An OAS domain 1 region spans residues 6-341 (TPAGALDKLV…GVLVQPWEGP (336 aa)). 2 interaction with dsRNA regions span residues 12–56 (DKLV…VIRI) and 185–199 (EPRK…AKLK). The segment at 342–462 (GLPRAGILDL…GSRMSPDLSQ (121 aa)) is linker. Residues 370-379 (LAVQSKERSQ) are compositionally biased toward basic and acidic residues. 2 disordered regions span residues 370 to 403 (LAVQ…NPSA) and 434 to 459 (TQST…MSPD). The span at 447–459 (SSISTAGSRMSPD) shows a compositional bias: polar residues. OAS domain regions lie at residues 463–793 (IPSK…PWDV) and 801–1135 (TLAE…WPVK). An ATP-binding site is contributed by Ser-855. Mg(2+) contacts are provided by Asp-867, Asp-869, and Asp-939. Positions 998, 1001, and 1020 each coordinate ATP.

This sequence belongs to the 2-5A synthase family. Monomer. Mg(2+) is required as a cofactor. In terms of tissue distribution, intestine.

The protein resides in the cytoplasm. The protein localises to the nucleus. It catalyses the reaction 3 ATP = 5'-triphosphoadenylyl-(2'-&gt;5')-adenylyl-(2'-&gt;5')-adenosine + 2 diphosphate. Its activity is regulated as follows. Produced as a latent enzyme which is activated by dsRNA generated during the course of viral infection. Strongly activated by long dsRNAs at least 50 nucleotides in length. ssRNA does not activate the enzyme. Functionally, interferon-induced, dsRNA-activated antiviral enzyme which plays a critical role in cellular innate antiviral response. In addition, it may also play a role in other cellular processes such as apoptosis, cell growth, differentiation and gene regulation. Synthesizes preferentially dimers of 2'-5'-oligoadenylates (2-5A) from ATP which then bind to the inactive monomeric form of ribonuclease L (RNase L) leading to its dimerization and subsequent activation. Activation of RNase L leads to degradation of cellular as well as viral RNA, resulting in the inhibition of protein synthesis, thus terminating viral replication. Can mediate the antiviral effect via the classical RNase L-dependent pathway or an alternative antiviral pathway independent of RNase L. This is 2'-5'-oligoadenylate synthase 3 (Oas3) from Mus musculus (Mouse).